An 860-amino-acid chain; its full sequence is SH2 domain-containing protein 3C (860 aa).

A Phosphoserine modification is found at serine 22. 2 disordered regions span residues 51-117 and 130-180; these read EATQ…PPGL and PLED…PEAG. Positions 162–175 are enriched in basic and acidic residues; the sequence is ERPPRDVHSERAAG. The 100-residue stretch at 220 to 319 folds into the SH2 domain; it reads WYHGRIPREV…QSGAIIYCPV (100 aa). Residues tyrosine 278 and tyrosine 283 each carry the phosphotyrosine modification. Residues 335-537 are disordered; the sequence is GQGSSKPASP…LSENGAPEGD (203 aa). Phosphoserine is present on serine 359. Low complexity-rich tracts occupy residues 405–420, 427–443, and 479–490; these read SPMS…PAYS, AAPA…SPVA, and SPSPSLSSYSDP. Serine 440 is modified (phosphoserine). Residues 586–854 form the Ras-GEF domain; it reads DARTLARHVT…TALSHKLEPA (269 aa). A Phosphotyrosine modification is found at tyrosine 793.

As to quaternary structure, component of a complex comprised of SH2D3C, BCAR1/CAS, and CRK. Within the complex, interacts with CRK and (via C-terminus) with BCAR1/CAS (via C-terminus). Interacts with NEDD9/HEF1. Interacts with EPHB2. Interacts with NEDD9/HEF1. Interacts with BCAR1/CAS. Interacts with PTK2B. In terms of assembly, interacts (via C-terminus) with BCAR1/CAS (via C-terminus). Interacts with IGF1. In terms of processing, phosphorylated by MAPK/ERK upon T-cell receptor stimulation in T-cells. As to expression, ubiquitously expressed.

Its subcellular location is the cytoplasm. It is found in the cell membrane. The protein localises to the cell projection. It localises to the axon. The protein resides in the ruffle membrane. Its function is as follows. Acts as an adapter protein that mediates cell signaling pathways involved in cellular functions such as cell adhesion and migration, tissue organization, and the regulation of the immune response. Plays a role in integrin-mediated cell adhesion through BCAR1-CRK-RAPGEF1 signaling and activation of the small GTPase RAP1. Promotes cell migration and invasion through the extracellular matrix. Required for marginal zone B-cell development and thymus-independent type 2 immune responses. Mediates migration and adhesion of B cells in the splenic marginal zone via promoting hyperphosphorylation of NEDD9/CASL. Plays a role in CXCL13-induced chemotaxis of B-cells. Plays a role in the migration of olfactory sensory neurons (OSNs) into the forebrain and the innervation of the olfactory bulb by the OSN axons during development. Required for the efficient tyrosine phosphorylation of BCAR1 in OSN axons. In terms of biological role, important regulator of chemokine-induced, integrin-mediated T lymphocyte adhesion and migration, acting upstream of RAP1. Required for tissue-specific adhesion of T lymphocytes to peripheral tissues. Required for basal and CXCL2 stimulated serine-threonine phosphorylation of NEDD9. May be involved in the regulation of T-cell receptor-mediated IL2 production through the activation of the JNK pathway in T-cells. Functionally, may be involved in the BCAR1/CAS-mediated JNK activation pathway. The protein is SH2 domain-containing protein 3C (SH2D3C) of Homo sapiens (Human).